Consider the following 494-residue polypeptide: Guanosine-5'-triphosphate,3'-diphosphate pyrophosphatase (494 aa).

This sequence belongs to the GppA/Ppx family. GppA subfamily.

It carries out the reaction guanosine 3'-diphosphate 5'-triphosphate + H2O = guanosine 3',5'-bis(diphosphate) + phosphate + H(+). Its pathway is purine metabolism; ppGpp biosynthesis; ppGpp from GTP: step 2/2. Catalyzes the conversion of pppGpp to ppGpp. Guanosine pentaphosphate (pppGpp) is a cytoplasmic signaling molecule which together with ppGpp controls the 'stringent response', an adaptive process that allows bacteria to respond to amino acid starvation, resulting in the coordinated regulation of numerous cellular activities. The polypeptide is Guanosine-5'-triphosphate,3'-diphosphate pyrophosphatase (Escherichia coli O139:H28 (strain E24377A / ETEC)).